The primary structure comprises 812 residues: MEESDEPEQPISLGRQEYRRRRLPSQPMVDKSQQTEIGEKKKGMAAVQPPAPKATHSIGNIPGGKANYSGKEYESLILSSQLQQTWMKRKQGQEMTDKSFQTDTSVEEKVEVIFMDKALEENSASVGEIAPASPQGVSEVEIPTSRPPSLLIDRAQQTSCTGDWSLISICSKDKVDKEQQTYFSELETTVKSMPGSSLIKSKEETVPIAEDGSLVEIDGSLEIEVLSTEKIPDVVMSFTEGEISGELQAVPDDEATVKAEHFFTEETSIQAPSLAKETSAAETTAKTPKEFVDIQALPADELSSTEPPADIRPPLVKGTLSEEPSDQQYPKGTVVAPSELPVEDLVPLSEEVLEKVQALAIDTILDDSGRAESTTVEEATGEVQPPLSEEITKEVPAEVHLPIATHSKEIVIIIDKEFAIDEDFEDQPPFITEVAEDEATAEVQPPSAEDAPEEVAPSEVLPPPTEQGTVEHMTAEVLSPSTEVGPAEVPPLPTEEWPLPPVTEESPAEVTPPETEEGPIEPAEEGPEDGLLLPTEEIPSEVQPPSLEKVPLEEVVIPQAEEVPLDDLPIEVQPLPAENIAGWVPDEFQAFPVDEYPAREDTVEVQPSSLESAPIEESSVEAQLLAAEADTAEIEETPTEVAPAEDQLLPAEEVVLKVEVATAWSPLSELPPAEEATVEAQLTSVEESLKRTSVDVQPPPLDTLAEESPAVKQPLKTDVVPMPEFPGEEMTAQDPLPPSVKTTVDQDLLKEHQLPEIADISQVKLEYTTFTGDKKSKGTDSVPEDVTGIKDDQISTFKIEGTIKIELKNSTS.

Residues Met1 to Ala66 form a disordered region. Ser25, Ser57, Ser125, Ser133, Ser184, and Ser273 each carry phosphoserine. Disordered regions lie at residues Ile269–Thr333, Asp367–Ser388, Phe424–Leu547, and Pro672–Lys741. The span at Ala275–Lys286 shows a compositional bias: low complexity. The segment covering Glu488–Pro501 has biased composition (pro residues). A compositionally biased stretch (low complexity) spans Val502–Pro513. Residues Glu514–Glu528 show a composition bias toward acidic residues.

As to quaternary structure, interacts with CABYR.

The protein localises to the cell projection. It is found in the cilium. Its subcellular location is the flagellum. May be involved in the later stages of fibrous sheath biogenesis. Binds calcium. This is Fibrous sheath CABYR-binding protein from Rattus norvegicus (Rat).